A 506-amino-acid polypeptide reads, in one-letter code: Trans-cinnamate 4-monooxygenase (506 aa).

The chain crosses the membrane as a helical span at residues 3–23; that stretch reads LLLLEKTLLALFIAATIAVTI. (E)-cinnamate is bound by residues 213 to 218 and Ala307; that span reads RSRLAQ. Position 448 (Cys448) interacts with heme.

Belongs to the cytochrome P450 family. The cofactor is heme.

Its subcellular location is the membrane. The catalysed reaction is (E)-cinnamate + reduced [NADPH--hemoprotein reductase] + O2 = (E)-4-coumarate + oxidized [NADPH--hemoprotein reductase] + H2O + H(+). Its pathway is phenylpropanoid metabolism; trans-4-coumarate biosynthesis; trans-4-coumarate from trans-cinnamate: step 1/1. Its function is as follows. Catalyzes the first oxidative step of the phenylpropanoid pathway in higher plants by transforming trans-cinnamate into p-coumarate. The compounds formed by this pathway are essential components for lignification, pollination, and defense against ultraviolet light, predators and pathogens. This Medicago sativa (Alfalfa) protein is Trans-cinnamate 4-monooxygenase (CYP73A3).